The primary structure comprises 716 residues: Ubiquitin thioesterase zranb1-B (716 aa).

2 RanBP2-type zinc fingers span residues 3-33 (DLGL…QRHN) and 82-111 (TSSK…QRQQ). Residues Cys10, Cys13, Cys24, Cys27, Cys88, Cys91, Cys102, and Cys105 each coordinate Zn(2+). The tract at residues 113–143 (SQQHSPLSPSETPQTSGSRPSPVTSDPCEEY) is disordered. A compositionally biased stretch (polar residues) spans 118 to 136 (PLSPSETPQTSGSRPSPVT). Residues 152–181 (HAQRWPCSACTYENWPKSLRCVVCDHPKPS) form a RanBP2-type 3 zinc finger. Zn(2+)-binding residues include Cys158, Cys161, Cys172, and Cys175. Residues 178 to 228 (PKPSGSPETPQQDSEAESATSPSIVNEQERENVRTAGGGGGGSRGRLRKLS) are disordered. The span at 183 to 203 (SPETPQQDSEAESATSPSIVN) shows a compositional bias: polar residues. ANK repeat units follow at residues 268–298 (RRSD…SGGD) and 321–348 (FTLV…QQTA). Residues 440–600 (LYALWNRTAG…RGHFSALVAM (161 aa)) enclose the OTU domain. Cys451 functions as the Nucleophile in the catalytic mechanism. His593 (proton acceptor) is an active-site residue.

This sequence belongs to the peptidase C64 family.

It localises to the cytoplasm. Its subcellular location is the nucleus. It catalyses the reaction Thiol-dependent hydrolysis of ester, thioester, amide, peptide and isopeptide bonds formed by the C-terminal Gly of ubiquitin (a 76-residue protein attached to proteins as an intracellular targeting signal).. In terms of biological role, ubiquitin thioesterase, which specifically hydrolyzes 'Lys-29'-linked and 'Lys-33'-linked diubiquitin. Also cleaves 'Lys-63'-linked chains, but with 40-fold less efficiency compared to 'Lys-29'-linked ones. Positive regulator of the Wnt signaling pathway that deubiquitinates apc protein, a negative regulator of Wnt-mediated transcription. Acts as a regulator of autophagy by mediating deubiquitination of pik3c3/vps34, thereby promoting autophagosome maturation. Plays a role in the regulation of cell morphology and cytoskeletal organization. Required in the stress fiber dynamics and cell migration. This is Ubiquitin thioesterase zranb1-B (zranb1b) from Danio rerio (Zebrafish).